A 1191-amino-acid chain; its full sequence is Homeodomain-interacting protein kinase 3 (1191 aa).

A Glycyl lysine isopeptide (Lys-Gly) (interchain with G-Cter in SUMO2) cross-link involves residue Lys27. A Protein kinase domain is found at 197–525; sequence YEVLDFLGRG…PIETLNHPFV (329 aa). Residues 203-211 and Lys226 contribute to the ATP site; that span reads LGRGTFGQV. Residue Asp322 is the Proton acceptor of the active site. Tyr359 carries the post-translational modification Phosphotyrosine. The interval 766-920 is interaction with AR; sequence QNRSNSLQNT…NSMSDDEQES (155 aa). The tract at residues 774–867 is interaction with FAS; that stretch reads NTNVPHSAFI…SPRPSLRECK (94 aa). Residues 801–828 are disordered; that stretch reads TQDNHTSEGEARTCHEASVRQDSSVSDK. Positions 802–828 are enriched in basic and acidic residues; sequence QDNHTSEGEARTCHEASVRQDSSVSDK. An interaction with UBL1 region spans residues 846–856; the sequence is ITISSDTDDEE. Residues 888-905 show a composition bias toward low complexity; that stretch reads SSPDSTLSTSSSGQSSPS. 2 disordered regions span residues 888-960 and 993-1022; these read SSPD…TCAG and TCQP…KPTS. Over residues 1008-1022 the composition is skewed to polar residues; it reads NQPSASAARQQKPTS.

It belongs to the protein kinase superfamily. CMGC Ser/Thr protein kinase family. HIPK subfamily. As to quaternary structure, interacts with Nkx1-2. Interacts with FAS and DAXX. Probably part of a complex consisting of HIPK3, FAS and FADD. Interacts with UBL1/SUMO-1. Interacts with and stabilizes ligand-bound androgen receptor (AR). Autophosphorylated. Autophosphorylation is not required for catalytic activity. Post-translationally, may be sumoylated.

The protein localises to the nucleus. It catalyses the reaction L-seryl-[protein] + ATP = O-phospho-L-seryl-[protein] + ADP + H(+). The enzyme catalyses L-threonyl-[protein] + ATP = O-phospho-L-threonyl-[protein] + ADP + H(+). Its function is as follows. Seems to negatively regulate apoptosis by promoting FADD phosphorylation. Enhances androgen receptor-mediated transcription. May act as a transcriptional corepressor for NK homeodomain transcription factors. The sequence is that of Homeodomain-interacting protein kinase 3 (Hipk3) from Rattus norvegicus (Rat).